A 476-amino-acid polypeptide reads, in one-letter code: tRNA-2-methylthio-N(6)-dimethylallyladenosine synthase (476 aa).

Residues 5 to 122 (KKLYIKTWGC…LPEMINQVKG (118 aa)) form the MTTase N-terminal domain. Residues cysteine 14, cysteine 51, cysteine 85, cysteine 159, cysteine 163, and cysteine 166 each coordinate [4Fe-4S] cluster. Positions 145–377 (RAEGPSAFVS…QQRINQQAMS (233 aa)) constitute a Radical SAM core domain. Residues 380–443 (RAMLGSVQRI…ANSLRGKVIR (64 aa)) form the TRAM domain.

It belongs to the methylthiotransferase family. MiaB subfamily. Monomer. [4Fe-4S] cluster serves as cofactor.

The protein localises to the cytoplasm. The enzyme catalyses N(6)-dimethylallyladenosine(37) in tRNA + (sulfur carrier)-SH + AH2 + 2 S-adenosyl-L-methionine = 2-methylsulfanyl-N(6)-dimethylallyladenosine(37) in tRNA + (sulfur carrier)-H + 5'-deoxyadenosine + L-methionine + A + S-adenosyl-L-homocysteine + 2 H(+). Functionally, catalyzes the methylthiolation of N6-(dimethylallyl)adenosine (i(6)A), leading to the formation of 2-methylthio-N6-(dimethylallyl)adenosine (ms(2)i(6)A) at position 37 in tRNAs that read codons beginning with uridine. The chain is tRNA-2-methylthio-N(6)-dimethylallyladenosine synthase from Photorhabdus laumondii subsp. laumondii (strain DSM 15139 / CIP 105565 / TT01) (Photorhabdus luminescens subsp. laumondii).